We begin with the raw amino-acid sequence, 351 residues long: 1-acylglycerol-3-phosphate O-acyltransferase ABHD5 (351 aa).

The 106-residue stretch at 79–184 (PLVLLHGFGG…LILVEPWGFP (106 aa)) folds into the AB hydrolase-1 domain. S124 carries the phosphoserine modification. Residues 329–334 (HYVYAD) carry the HXXXXD motif motif.

It belongs to the peptidase S33 family. ABHD4/ABHD5 subfamily. As to quaternary structure, interacts with ADRP and PLIN. Interacts with PNPLA2. Interacts with PLIN5; promotes interaction with PNPLA2.

It localises to the cytoplasm. The protein localises to the lipid droplet. The enzyme catalyses a 1-acyl-sn-glycero-3-phosphate + an acyl-CoA = a 1,2-diacyl-sn-glycero-3-phosphate + CoA. It catalyses the reaction 1-(9Z-octadecenoyl)-sn-glycero-3-phosphate + (9Z)-octadecenoyl-CoA = 1,2-di-(9Z-octadecenoyl)-sn-glycero-3-phosphate + CoA. It carries out the reaction 1-(9Z-octadecenoyl)-sn-glycero-3-phosphate + hexadecanoyl-CoA = 1-(9Z)-octadecenoyl-2-hexadecanoyl-sn-glycero-3-phosphate + CoA. The catalysed reaction is 1-(9Z-octadecenoyl)-sn-glycero-3-phosphate + octadecanoyl-CoA = 1-(9Z-octadecenoyl)-2-octadecanoyl-sn-glycero-3-phosphate + CoA. The enzyme catalyses 1-(9Z-octadecenoyl)-sn-glycero-3-phosphate + (5Z,8Z,11Z,14Z)-eicosatetraenoyl-CoA = 1-(9Z)-octadecenoyl-2-(5Z,8Z,11Z,14Z)-eicosatetraenoyl-sn-glycero-3-phosphate + CoA. It catalyses the reaction eicosanoyl-CoA + 1-(9Z-octadecenoyl)-sn-glycero-3-phosphate = 1-(9Z)-octadecenoyl-2-eicosanoyl-sn-glycero-3-phosphate + CoA. It carries out the reaction 1-hexadecanoyl-sn-glycero-3-phosphate + (9Z)-octadecenoyl-CoA = 1-hexadecanoyl-2-(9Z-octadecenoyl)-sn-glycero-3-phosphate + CoA. The catalysed reaction is 1-octadecanoyl-sn-glycero-3-phosphate + (9Z)-octadecenoyl-CoA = 1-octadecanoyl-2-(9Z-octadecenoyl)-sn-glycero-3-phosphate + CoA. The enzyme catalyses 1-(5Z,8Z,11Z,14Z-eicosatetraenoyl)-sn-glycero-3-phosphate + (9Z)-octadecenoyl-CoA = 1-(5Z,8Z,11Z,14Z)-eicosatetraenoyl-2-(9Z)-octadecenoyl-sn-glycero-3-phosphate + CoA. With respect to regulation, acyltransferase activity is inhibited by detergents such as Triton X-100 and 3-[(3-cholamidopropyl)dimethylammonio]-1-propanesulfonate (CHAPS). Acyltransferase activity is inhibited by the presence of magnesium and calcium. In terms of biological role, coenzyme A-dependent lysophosphatidic acid acyltransferase that catalyzes the transfer of an acyl group on a lysophosphatidic acid. Functions preferentially with 1-oleoyl-lysophosphatidic acid followed by 1-palmitoyl-lysophosphatidic acid, 1-stearoyl-lysophosphatidic acid and 1-arachidonoyl-lysophosphatidic acid as lipid acceptor. Functions preferentially with arachidonoyl-CoA followed by oleoyl-CoA as acyl group donors. Functions in phosphatidic acid biosynthesis. May regulate the cellular storage of triacylglycerol through activation of the phospholipase PNPLA2. Involved in keratinocyte differentiation. Regulates lipid droplet fusion. The protein is 1-acylglycerol-3-phosphate O-acyltransferase ABHD5 of Rattus norvegicus (Rat).